Consider the following 341-residue polypeptide: UDP-3-O-acylglucosamine N-acyltransferase (341 aa).

Catalysis depends on histidine 241, which acts as the Proton acceptor.

This sequence belongs to the transferase hexapeptide repeat family. LpxD subfamily. As to quaternary structure, homotrimer.

It carries out the reaction a UDP-3-O-[(3R)-3-hydroxyacyl]-alpha-D-glucosamine + a (3R)-hydroxyacyl-[ACP] = a UDP-2-N,3-O-bis[(3R)-3-hydroxyacyl]-alpha-D-glucosamine + holo-[ACP] + H(+). It participates in bacterial outer membrane biogenesis; LPS lipid A biosynthesis. Functionally, catalyzes the N-acylation of UDP-3-O-acylglucosamine using 3-hydroxyacyl-ACP as the acyl donor. Is involved in the biosynthesis of lipid A, a phosphorylated glycolipid that anchors the lipopolysaccharide to the outer membrane of the cell. The sequence is that of UDP-3-O-acylglucosamine N-acyltransferase from Mannheimia succiniciproducens (strain KCTC 0769BP / MBEL55E).